Consider the following 191-residue polypeptide: Ureidoglycolate lyase (191 aa).

Belongs to the ureidoglycolate lyase family. As to quaternary structure, homodimer.

The enzyme catalyses (S)-ureidoglycolate = urea + glyoxylate. It functions in the pathway nitrogen metabolism; (S)-allantoin degradation. In terms of biological role, catalyzes the catabolism of the allantoin degradation intermediate (S)-ureidoglycolate, generating urea and glyoxylate. Involved in the utilization of allantoin as secondary nitrogen source when primary sources are limiting. The polypeptide is Ureidoglycolate lyase (Schizosaccharomyces pombe (strain 972 / ATCC 24843) (Fission yeast)).